Consider the following 289-residue polypeptide: uncharacterized protein (289 aa).

This is an uncharacterized protein from Acanthamoeba polyphaga mimivirus (APMV).